The following is a 770-amino-acid chain: Proprotein convertase subtilisin/kexin type 7 (770 aa).

The first 36 residues, 1-36 (MPKGRQKVPHLDAHLGLPICLWLELAIFFLVPQVMG), serve as a signal peptide directing secretion. Positions 37–140 (LSEAGGLDIL…EQTLLKRAKR (104 aa)) are excised as a propeptide. At 141-666 (SIHFNDPKYP…YTITPNTLKT (526 aa)) the chain is on the extracellular side. Positions 152-472 (QWHLNNRRSP…FGLLNAWRLV (321 aa)) constitute a Peptidase S8 domain. N-linked (GlcNAc...) asparagine glycans are attached at residues Asn166 and Asn174. Residue Asp186 is the Charge relay system of the active site. Positions 195-228 (DIAPNYSPEGSYDLNSNDPDPMPHPDEENGNHHG) are disordered. Over residues 215 to 225 (PMPHPDEENGN) the composition is skewed to basic and acidic residues. The Charge relay system role is filled by His227. An N-linked (GlcNAc...) asparagine glycan is attached at Asn240. Residue Ser405 is the Charge relay system of the active site. Positions 480–617 (SVPYLASYVS…QLTLYGSMWS (138 aa)) constitute a P/Homo B domain. Asn510 carries N-linked (GlcNAc...) asparagine glycosylation. A helical membrane pass occupies residues 667–687 (LVLVGCFSVFWTIYYMLEVCL). Topologically, residues 688 to 770 (SQRNKASTHG…LLQGKSGQIC (83 aa)) are cytoplasmic.

It belongs to the peptidase S8 family. Requires Ca(2+) as cofactor. In terms of tissue distribution, widely expressed. Expressed in brain, lung, muscle, heart, liver, kidney, spleen and thymus.

The protein resides in the golgi apparatus. It is found in the trans-Golgi network membrane. With respect to regulation, inhibited by zinc and copper. Its function is as follows. Serine endoprotease that processes various proproteins by cleavage at paired basic amino acids, recognizing the RXXX[KR]R consensus motif. Likely functions in the constitutive secretory pathway. This is Proprotein convertase subtilisin/kexin type 7 (Pcsk7) from Mus musculus (Mouse).